The sequence spans 334 residues: L-lactate dehydrogenase B-B chain (334 aa).

NAD(+) contacts are provided by residues Gly30 to Lys58 and Arg100. Residues Arg107, Asn139, and Arg170 each contribute to the substrate site. Position 139 (Asn139) interacts with NAD(+). The active-site Proton acceptor is the His194. Position 249 (Thr249) interacts with substrate.

It belongs to the LDH/MDH superfamily. LDH family. As to quaternary structure, homotetramer.

The protein resides in the cytoplasm. The catalysed reaction is (S)-lactate + NAD(+) = pyruvate + NADH + H(+). Its pathway is fermentation; pyruvate fermentation to lactate; (S)-lactate from pyruvate: step 1/1. This is L-lactate dehydrogenase B-B chain from Danio rerio (Zebrafish).